Reading from the N-terminus, the 337-residue chain is Glycerol-3-phosphate dehydrogenase [NAD(P)+] (337 aa).

The NADPH site is built by Trp-11, Arg-30, and Lys-113. Lys-113, Gly-141, and Ser-143 together coordinate sn-glycerol 3-phosphate. Ala-145 is a binding site for NADPH. Residues Lys-196, Asp-249, Ser-259, Arg-260, and Asn-261 each coordinate sn-glycerol 3-phosphate. The Proton acceptor role is filled by Lys-196. Arg-260 is a binding site for NADPH. The NADPH site is built by Val-284 and Glu-286.

The protein belongs to the NAD-dependent glycerol-3-phosphate dehydrogenase family.

It is found in the cytoplasm. The enzyme catalyses sn-glycerol 3-phosphate + NAD(+) = dihydroxyacetone phosphate + NADH + H(+). It carries out the reaction sn-glycerol 3-phosphate + NADP(+) = dihydroxyacetone phosphate + NADPH + H(+). It functions in the pathway membrane lipid metabolism; glycerophospholipid metabolism. In terms of biological role, catalyzes the reduction of the glycolytic intermediate dihydroxyacetone phosphate (DHAP) to sn-glycerol 3-phosphate (G3P), the key precursor for phospholipid synthesis. This chain is Glycerol-3-phosphate dehydrogenase [NAD(P)+], found in Leptothrix cholodnii (strain ATCC 51168 / LMG 8142 / SP-6) (Leptothrix discophora (strain SP-6)).